The following is a 368-amino-acid chain: Branched-chain-amino-acid aminotransferase (368 aa).

Arginine 101 is a pyridoxal 5'-phosphate binding site. An N6-(pyridoxal phosphate)lysine modification is found at lysine 204. Pyridoxal 5'-phosphate-binding positions include tyrosine 209 and 271-272; that span reads IT. Lysine 299 participates in a covalent cross-link: Isoglutamyl lysine isopeptide (Lys-Gln) (interchain with Q-Cter in protein Pup). Position 314 (threonine 314) interacts with pyridoxal 5'-phosphate.

This sequence belongs to the class-IV pyridoxal-phosphate-dependent aminotransferase family. As to quaternary structure, homodimer. Requires pyridoxal 5'-phosphate as cofactor.

It carries out the reaction L-isoleucine + 2-oxoglutarate = (S)-3-methyl-2-oxopentanoate + L-glutamate. The enzyme catalyses L-valine + 2-oxoglutarate = 3-methyl-2-oxobutanoate + L-glutamate. It catalyses the reaction L-leucine + 2-oxoglutarate = 4-methyl-2-oxopentanoate + L-glutamate. Its pathway is amino-acid biosynthesis; L-isoleucine biosynthesis; L-isoleucine from 2-oxobutanoate: step 4/4. The protein operates within amino-acid biosynthesis; L-leucine biosynthesis; L-leucine from 3-methyl-2-oxobutanoate: step 4/4. It functions in the pathway amino-acid biosynthesis; L-valine biosynthesis; L-valine from pyruvate: step 4/4. Its activity is regulated as follows. Inhibited by ammonium sulfate at millimolar concentrations and by O-benzylhydroxylamine (Obe). In terms of biological role, catalyzes the reversible transfers of an amino group from glutamate to the alpha-ketoacid of the respective amino acid in the final step in the biosynthesis of branchedchain amino acids. The amino acids can be ranked in the following order with respect to their efficiency as amino donor: Leu &gt; Ile &gt; Val. The chain is Branched-chain-amino-acid aminotransferase (ilvE) from Mycolicibacterium smegmatis (strain ATCC 700084 / mc(2)155) (Mycobacterium smegmatis).